The primary structure comprises 394 residues: Elongation factor Tu 2 (394 aa).

A tr-type G domain is found at 10–204 (KPHVNVGTIG…FLDSYIPEPE (195 aa)). The G1 stretch occupies residues 19-26 (GHVDHGKT). Residue 19–26 (GHVDHGKT) participates in GTP binding. T26 provides a ligand contact to Mg(2+). The segment at 60-64 (GITIN) is G2. The interval 81–84 (DCPG) is G3. Residues 81–85 (DCPGH) and 136–139 (NKCD) contribute to the GTP site. A G4 region spans residues 136 to 139 (NKCD). The segment at 174 to 176 (SAL) is G5.

This sequence belongs to the TRAFAC class translation factor GTPase superfamily. Classic translation factor GTPase family. EF-Tu/EF-1A subfamily. Monomer.

Its subcellular location is the cytoplasm. It carries out the reaction GTP + H2O = GDP + phosphate + H(+). Its function is as follows. GTP hydrolase that promotes the GTP-dependent binding of aminoacyl-tRNA to the A-site of ribosomes during protein biosynthesis. The polypeptide is Elongation factor Tu 2 (Shigella flexneri serotype 5b (strain 8401)).